Consider the following 396-residue polypeptide: Imidazolonepropionase (396 aa).

Histidine 69 and histidine 71 together coordinate Fe(3+). Positions 69 and 71 each coordinate Zn(2+). 4-imidazolone-5-propanoate-binding residues include arginine 78, tyrosine 136, and histidine 163. Tyrosine 136 contacts N-formimidoyl-L-glutamate. Residue histidine 224 participates in Fe(3+) binding. Residue histidine 224 coordinates Zn(2+). Residue glutamine 227 coordinates 4-imidazolone-5-propanoate. Aspartate 298 contacts Fe(3+). Position 298 (aspartate 298) interacts with Zn(2+). N-formimidoyl-L-glutamate is bound by residues asparagine 300 and glycine 302. 4-imidazolone-5-propanoate is bound at residue threonine 303.

Belongs to the metallo-dependent hydrolases superfamily. HutI family. Zn(2+) serves as cofactor. Requires Fe(3+) as cofactor.

It localises to the cytoplasm. It carries out the reaction 4-imidazolone-5-propanoate + H2O = N-formimidoyl-L-glutamate. It functions in the pathway amino-acid degradation; L-histidine degradation into L-glutamate; N-formimidoyl-L-glutamate from L-histidine: step 3/3. In terms of biological role, catalyzes the hydrolytic cleavage of the carbon-nitrogen bond in imidazolone-5-propanoate to yield N-formimidoyl-L-glutamate. It is the third step in the universal histidine degradation pathway. In Cutibacterium acnes (strain DSM 16379 / KPA171202) (Propionibacterium acnes), this protein is Imidazolonepropionase.